Here is a 4065-residue protein sequence, read N- to C-terminus: Polyketide synthase-nonribosomal peptide synthetase pyiS (4065 aa).

One can recognise a Ketosynthase family 3 (KS3) domain in the interval 6 to 440; it reads SEPVAIIGTG…GANCHAILEA (435 aa). Active-site for beta-ketoacyl synthase activity residues include Cys-179, His-314, and His-360. The segment at 552–875 is acyl transferase; that stretch reads IFTGQGAQWP…PYTGVLSRGK (324 aa). An N-terminal hotdog fold region spans residues 950 to 1087; that stretch reads NELLGRQILD…CDVLVTYGDS (138 aa). In terms of domain architecture, PKS/mFAS DH spans 950–1260; the sequence is NELLGRQILD…TQPLFNPTEA (311 aa). Residues 951-1254 are dehydratase (DH) domain; that stretch reads ELLGRQILDG…QVEGLQTQPL (304 aa). His-982 acts as the Proton acceptor; for dehydratase activity in catalysis. Residues 1102–1260 are C-terminal hotdog fold; the sequence is EYFMLGVESD…TQPLFNPTEA (159 aa). Asp-1166 acts as the Proton donor; for dehydratase activity in catalysis. The methyltransferase (MT) domain stretch occupies residues 1409-1593; the sequence is AHGMPRYTKY…KQTGFSGIDT (185 aa). The ketoreductase (KR)domain stretch occupies residues 2129–2302; it reads TYWLVGLSGT…NASVVHIGAI (174 aa). In terms of domain architecture, Carrier 1 spans 2411-2492; that stretch reads INSAEVYEII…EILETAQQLL (82 aa). Ser-2452 is subject to O-(pantetheine 4'-phosphoryl)serine. Positions 2497 to 2561 are disordered; that stretch reads LPKMDPNDKS…GAKKGETVSK (65 aa). Basic and acidic residues predominate over residues 2551–2561; that stretch reads SGAKKGETVSK. Residues 2645 to 3076 are condensation; that stretch reads SKKTPISFAQ…FSRNQALRLA (432 aa). Positions 3112–3516 are adenylation; it reads DIAKQKSHSL…RLLLEGRIAD (405 aa). Residues 3634–3714 form the Carrier 2 domain; that stretch reads QDLNDTESRL…DMAALVDELS (81 aa). O-(pantetheine 4'-phosphoryl)serine is present on Ser-3674. The segment at 3760 to 3975 is reductase-like; it reads LTGSTGFLGR…LDFISVDEAA (216 aa).

The protein belongs to the NRP synthetase family.

It participates in mycotoxin biosynthesis. Functionally, hybrid PKS-NRPS synthetase; part of the gene cluster that mediates the biosynthesis of the mycotoxin pyrichalasin H, a tyrosine-derived cytochalasan that inhibits the growth of rice seedlings, but also inhibits lymphocyte capping and actin polymerization and alters cell morphology. Pyrichalasin H is indicated as the responsible agent for the genus-specific pathogenicity of M.grisea toward crabgrass. The first step in the pathway is catalyzed by the O-methyltransferase pyiA which methylates free tyrosine to generate the precursor O-methyltyrosine. The hybrid PKS-NRPS pyiS, assisted by the enoyl reductase pyiC, are responsible for fusion of the O-methyltyrosine precursor and the polyketide backbone. The polyketide synthase module (PKS) of pyiS is responsible for the synthesis of the polyketide backbone and the downstream nonribosomal peptide synthetase (NRPS) amidates the carboxyl end of the polyketide with the O-methyltyrosine precursor. As the NRPS A-domain demonstrates substrate tolerance, pyiS can also use phenylalanine, tyrosine and even para-chlorophenylalanine as amino acid precursor, which leads to the production of novel cytochalasans, including halogenated cytochalasans. Because pyiS lacks a designated enoylreductase (ER) domain, the required activity is provided the enoyl reductase pyiC. Reduction by the hydrolyase pyiE leads to 1,5-dihydropyrrolone, which is substrate for dehydration and intra-molecular Diels-Alder cyclization by the Diels-Alderase pyiF to yield the required isoindolone-fused macrocycle. The tailoring cytochrome P450 monooxygenases piyD and piyG catalyze the hydroxylation at C-18 and C-7, respectivily, whereas the short-chain dehydrogenase/reductase pyiH reduces the carbonyl at C-21 in preparation for the transfer of an acetyl group by the acetyltransferase pyiB. These 3 reactions whose order is not clear yet, lead to the production of O-methylpyrichalasin J, a deacetylated pyrichalasin H. Finally, pyiB to converts O-methylpyrichalasin J into the final product pyrichalasin H via acetylation of C-21. The polypeptide is Polyketide synthase-nonribosomal peptide synthetase pyiS (Pyricularia grisea (Crabgrass-specific blast fungus)).